Consider the following 507-residue polypeptide: Maturase K (507 aa).

It belongs to the intron maturase 2 family. MatK subfamily.

It localises to the plastid. The protein resides in the chloroplast. Its function is as follows. Usually encoded in the trnK tRNA gene intron. Probably assists in splicing its own and other chloroplast group II introns. The chain is Maturase K from Lens ervoides (Beaded lentil).